Reading from the N-terminus, the 414-residue chain is Gamma-glutamyl phosphate reductase (414 aa).

The protein belongs to the gamma-glutamyl phosphate reductase family.

It localises to the cytoplasm. The enzyme catalyses L-glutamate 5-semialdehyde + phosphate + NADP(+) = L-glutamyl 5-phosphate + NADPH + H(+). It participates in amino-acid biosynthesis; L-proline biosynthesis; L-glutamate 5-semialdehyde from L-glutamate: step 2/2. Functionally, catalyzes the NADPH-dependent reduction of L-glutamate 5-phosphate into L-glutamate 5-semialdehyde and phosphate. The product spontaneously undergoes cyclization to form 1-pyrroline-5-carboxylate. The polypeptide is Gamma-glutamyl phosphate reductase (Xanthomonas oryzae pv. oryzae (strain KACC10331 / KXO85)).